The chain runs to 598 residues: IQ calmodulin-binding motif-containing protein 1 (598 aa).

The interaction with BBS1, BBS8 and BBS9 stretch occupies residues methionine 1 to valine 157. Residues glutamine 287 to proline 598 form an interaction with CEP290, BBS1, BBS2, BBS4, BBS5, BBS7, BBS8 and BBS9 region. 4 IQ domains span residues leucine 294 to leucine 317, proline 318 to glutamate 338, glutamate 387 to glutamate 416, and tyrosine 417 to lysine 437. Residues methionine 336–leucine 362 adopt a coiled-coil conformation. Positions alanine 530–proline 598 are interaction with BBS1, BBS2, BBS4, BBS7, BBS8 and BBS9.

Interacts with calmodulin. Interacts with CEP290/NPHP6; IQCB1/NPHP5 and CEP290/NPHP6; are proposed to form a functional NPHP5-6 module localized to the centrosome. Interacts with ATXN10. Interacts with NPHP1, INVS, NPHP4 and RPGRIP1L; these interactions likely require additional interactors. Associates with the BBSome complex; interacts with BBS1, BBS2, BBS4, BBS5, BBS7, BBS8 and BBS9. In terms of tissue distribution, localized to the outer segment and connecting cilia of photoreceptor cells.

Its subcellular location is the cytoplasm. It localises to the cytoskeleton. It is found in the microtubule organizing center. The protein resides in the centrosome. Involved in ciliogenesis. The function in an early step in cilia formation depends on its association with CEP290/NPHP6. Involved in regulation of the BBSome complex integrity, specifically for presence of BBS2 and BBS5 in the complex, and in ciliary targeting of selected BBSome cargos. May play a role in controlling entry of the BBSome complex to cilia possibly implicating CEP290/NPHP6. This is IQ calmodulin-binding motif-containing protein 1 (Iqcb1) from Mus musculus (Mouse).